The following is a 341-amino-acid chain: NADH-quinone oxidoreductase subunit H (341 aa).

Helical transmembrane passes span 6–26 (LIVS…LMAY), 76–96 (LVFL…AAVI), 118–138 (VAVL…ILGG), 157–177 (VISY…LSGS), 198–218 (LPNW…IAAV), 252–272 (FLAE…LFLG), 278–298 (FADG…FYVW), and 313–333 (GLAW…TGLV).

The protein belongs to the complex I subunit 1 family. As to quaternary structure, NDH-1 is composed of 14 different subunits. Subunits NuoA, H, J, K, L, M, N constitute the membrane sector of the complex.

Its subcellular location is the cell membrane. It carries out the reaction a quinone + NADH + 5 H(+)(in) = a quinol + NAD(+) + 4 H(+)(out). Its function is as follows. NDH-1 shuttles electrons from NADH, via FMN and iron-sulfur (Fe-S) centers, to quinones in the respiratory chain. The immediate electron acceptor for the enzyme in this species is believed to be ubiquinone. Couples the redox reaction to proton translocation (for every two electrons transferred, four hydrogen ions are translocated across the cytoplasmic membrane), and thus conserves the redox energy in a proton gradient. This subunit may bind ubiquinone. This chain is NADH-quinone oxidoreductase subunit H, found in Thermomicrobium roseum (strain ATCC 27502 / DSM 5159 / P-2).